The chain runs to 141 residues: 16 kDa protein (141 aa).

Residues 95 to 116 (ESSSATRKKSHNSKNSKKKFKE) form a disordered region. Basic residues predominate over residues 100-113 (TRKKSHNSKNSKKK).

This is 16 kDa protein from Tobacco rattle virus (strain PSG).